Here is an 859-residue protein sequence, read N- to C-terminus: Probable helicase A859L (859 aa).

The region spanning 178 to 349 (YQELQRSGRA…KNRELFGGVA (172 aa)) is the Helicase ATP-binding domain. An ATP-binding site is contributed by 191 to 198 (MACRCGKT). The DEAH box motif lies at 298–301 (DECH). The Helicase C-terminal domain occupies 394 to 553 (QIIMALAYLK…RFYEHLLNPS (160 aa)).

The protein belongs to the asfivirus helicase A859L family.

This chain is Probable helicase A859L, found in African swine fever virus (isolate Pig/Kenya/KEN-50/1950) (ASFV).